The chain runs to 226 residues: 7-carboxy-7-deazaguanine synthase (226 aa).

Residues 10-12 (LQG) and Arg-25 contribute to the substrate site. The Radical SAM core domain maps to 16–221 (YTGIPCIFVR…LQTHKFIWTP (206 aa)). [4Fe-4S] cluster contacts are provided by Cys-29, Cys-33, and Cys-36. Ser-38 is a binding site for Mg(2+). Thr-69 contributes to the substrate binding site. Gly-71 is a binding site for S-adenosyl-L-methionine.

This sequence belongs to the radical SAM superfamily. 7-carboxy-7-deazaguanine synthase family. As to quaternary structure, homodimer. [4Fe-4S] cluster serves as cofactor. Requires S-adenosyl-L-methionine as cofactor. The cofactor is Mg(2+).

The enzyme catalyses 6-carboxy-5,6,7,8-tetrahydropterin + H(+) = 7-carboxy-7-deazaguanine + NH4(+). It functions in the pathway purine metabolism; 7-cyano-7-deazaguanine biosynthesis. In terms of biological role, catalyzes the complex heterocyclic radical-mediated conversion of 6-carboxy-5,6,7,8-tetrahydropterin (CPH4) to 7-carboxy-7-deazaguanine (CDG), a step common to the biosynthetic pathways of all 7-deazapurine-containing compounds. This is 7-carboxy-7-deazaguanine synthase from Koribacter versatilis (strain Ellin345).